A 488-amino-acid chain; its full sequence is Glutamyl-tRNA(Gln) amidotransferase subunit A (488 aa).

Residues K77 and S152 each act as charge relay system in the active site. S176 acts as the Acyl-ester intermediate in catalysis.

This sequence belongs to the amidase family. GatA subfamily. As to quaternary structure, heterotrimer of A, B and C subunits.

The catalysed reaction is L-glutamyl-tRNA(Gln) + L-glutamine + ATP + H2O = L-glutaminyl-tRNA(Gln) + L-glutamate + ADP + phosphate + H(+). Allows the formation of correctly charged Gln-tRNA(Gln) through the transamidation of misacylated Glu-tRNA(Gln) in organisms which lack glutaminyl-tRNA synthetase. The reaction takes place in the presence of glutamine and ATP through an activated gamma-phospho-Glu-tRNA(Gln). This is Glutamyl-tRNA(Gln) amidotransferase subunit A from Streptococcus pneumoniae serotype 19F (strain G54).